We begin with the raw amino-acid sequence, 296 residues long: Elongation factor Ts (296 aa).

The involved in Mg(2+) ion dislocation from EF-Tu stretch occupies residues 79 to 82 (TDFV).

The protein belongs to the EF-Ts family.

Its subcellular location is the cytoplasm. Its function is as follows. Associates with the EF-Tu.GDP complex and induces the exchange of GDP to GTP. It remains bound to the aminoacyl-tRNA.EF-Tu.GTP complex up to the GTP hydrolysis stage on the ribosome. The sequence is that of Elongation factor Ts from Acholeplasma laidlawii (strain PG-8A).